Here is a 410-residue protein sequence, read N- to C-terminus: Argininosuccinate synthase (410 aa).

10-18 (AYSGGLDTS) provides a ligand contact to ATP. L-citrulline-binding residues include Y88 and S93. Residue G118 participates in ATP binding. L-aspartate-binding residues include T120, N124, and D125. N124 provides a ligand contact to L-citrulline. L-citrulline is bound by residues R128, S177, S186, E262, and Y274.

This sequence belongs to the argininosuccinate synthase family. Type 1 subfamily. As to quaternary structure, homotetramer.

The protein localises to the cytoplasm. The catalysed reaction is L-citrulline + L-aspartate + ATP = 2-(N(omega)-L-arginino)succinate + AMP + diphosphate + H(+). Its pathway is amino-acid biosynthesis; L-arginine biosynthesis; L-arginine from L-ornithine and carbamoyl phosphate: step 2/3. This Thermoanaerobacter sp. (strain X514) protein is Argininosuccinate synthase.